An 848-amino-acid chain; its full sequence is Mitochondrial escape protein 2 (848 aa).

The transit peptide at 1-42 (MNSITTPRMGATILRTIAPNVGVLSQVLPLGLRRVYPRGVRW) directs the protein to the mitochondrion. Residues 43 to 284 (VSSEIQQKDR…IRNFYVTHTR (242 aa)) are Mitochondrial matrix-facing. An RRM domain is found at 196–269 (TTVIIKCQGP…TVLHLQYENV (74 aa)). A helical membrane pass occupies residues 285–305 (IAIPVTFALLSILAVLIFDPI). Topologically, residues 306-848 (REFFIEQKIT…LSQESNNRRK (543 aa)) are mitochondrial intermembrane. The segment at 603–627 (RAKKAEEDEPTEKASPEHSQYDEND) is disordered. Over residues 613-627 (TEKASPEHSQYDEND) the composition is skewed to basic and acidic residues.

Belongs to the YME2 family.

It is found in the mitochondrion inner membrane. Plays a role in maintaining the mitochondrial genome and in controlling the mtDNA escape. Involved in the regulation of mtDNA nucleotide structure and number. May have a dispensable role in early maturation of pre-rRNA. This is Mitochondrial escape protein 2 (YME2) from Candida glabrata (strain ATCC 2001 / BCRC 20586 / JCM 3761 / NBRC 0622 / NRRL Y-65 / CBS 138) (Yeast).